A 548-amino-acid polypeptide reads, in one-letter code: Multidrug efflux system permease protein Rv1217c (548 aa).

Helical transmembrane passes span 39 to 59, 99 to 119, 148 to 168, 178 to 198, 210 to 230, 253 to 273, 313 to 333, 359 to 379, 410 to 430, 450 to 470, 477 to 497, and 521 to 541; these read VSLP…YIAS, GIWK…LTVI, ALLL…LGLL, VAFG…AAVA, AVAF…DAGS, WWVL…AYRL, LLWT…VHGI, AFLA…AVSL, LAMA…AAGL, AAVQ…LFGL, VAWG…LAGF, and VPLL…AMAF.

As to quaternary structure, the complex is probably composed of two ATP-binding proteins (Rv1218c) and a transmembrane protein (Rv1217c).

It localises to the cell inner membrane. Probably part of the ABC transporter complex Rv1217c-Rv1218c involved in the resistance to a wide range of structurally unrelated drugs. Probably responsible for the translocation of the substrate across the membrane. This is Multidrug efflux system permease protein Rv1217c from Mycobacterium tuberculosis (strain ATCC 25618 / H37Rv).